The chain runs to 627 residues: uncharacterized protein (627 aa).

Residues 21–136 (GISASDKILS…NSVCKRQTRS (116 aa)) form the WH1 domain. Residues 310–347 (RGSLSTPRIPTHRDSYRSATKPDTVPKQTPPPTHNSYV) form a disordered region.

This is an uncharacterized protein from Caenorhabditis elegans.